Reading from the N-terminus, the 1010-residue chain is Lysosomal alpha-mannosidase (1010 aa).

The N-terminal stretch at 1–22 (MVIKKLFILIFCLFLIINEING) is a signal peptide. Positions 23–40 (KKTKINDIKKSKPKLSST) are cleaved as a propeptide — pro I. Residues His51 and Asp53 each coordinate Zn(2+). Residue Asn68 is glycosylated (N-linked (GlcNAc...) asparagine). Residues Asp173 and His420 each coordinate Zn(2+). The active-site Nucleophile is the Asp173. N-linked (GlcNAc...) asparagine glycosylation is found at Asn480, Asn520, Asn528, Asn539, Asn623, Asn760, Asn784, Asn828, Asn954, and Asn963. Positions 508-595 (RNEPVRIPIP…GGGKINEKVS (88 aa)) are cleaved as a propeptide — pro II.

The protein belongs to the glycosyl hydrolase 38 family. As to quaternary structure, tetramer of equimolar amounts of 60 and 58 kDa subunits. It depends on Zn(2+) as a cofactor. Post-translationally, first cleaved into the mature 58 kDa subunit and an intermediate 82 kDa subunit. The latter is then cleaved to its mature 60 kDa subunit form. These events occur in multiple intracellular compartments. The 60 kDa subunit may form one or more intramolecular disulfide bonds.

The protein resides in the lysosome. It catalyses the reaction Hydrolysis of terminal, non-reducing alpha-D-mannose residues in alpha-D-mannosides.. This is Lysosomal alpha-mannosidase (manA) from Dictyostelium discoideum (Social amoeba).